The sequence spans 356 residues: Phosphoribosyl pyrophosphate synthase-associated protein 1 (356 aa).

Residue M1 is modified to N-acetylmethionine. Phosphoserine occurs at positions 177 and 215.

It belongs to the ribose-phosphate pyrophosphokinase family. Binds to PRPS1 and PRPS2. Ubiquitous.

Seems to play a negative regulatory role in 5-phosphoribose 1-diphosphate synthesis. In Rattus norvegicus (Rat), this protein is Phosphoribosyl pyrophosphate synthase-associated protein 1 (Prpsap1).